The chain runs to 2368 residues: MESHVKYLDELILAIKDLNSGVDSKVQIKKVPTDPSSSQEYAKSLKILNTLIRNLKDQRRNNIMKNDTIFSKTVSALALLLEYNPFLLVMKDSNGNFEIQRLIDDFLNISVLNYDNYHRIWFMRRKLGSWCKACVEFYGKPAKFQLTAHFENTMNLYEQALTEVLLGKTELLKFYDTLKGLYILLYWFTSEYSTFGNSIAFLDSSLGFTKFDFNFQRLIRIVLYVFDSCELAALEYAEIQLKYISLVVDYVCNRTISTALDAPALVCCEQLKFVLTTMHHFLDNKYGLLDNDPTMAKGILRLYSLCISNDFSKCFVDHFPIDQWADFSQSEHFPFTQLTNKALSIVYFDLKRRSLPVEALKYDNKFNIWVYQSEPDSSLKNVTSPFDDRYKQLEKLRLLVLKKFNKTERGTLLKYRVNQLSPGFFQRAGNDFKLILNEASVSIQTCFKTNNITRLTSWTVILGRLACLESEKFSGTLPNSTKDMDNWYVCHLCDIEKTGNPFVRINPNRPEAAGKSEIFRILHSNFLSHPNIDEFSESLLSGILFSLHRIFSHFQPPKLTDGNGQINKSFKLVQKCFMNSNRYLRLLSTRIIPLFNISDSHNSEDEHTATLIKFLQSQKLPVVKENLVIAWTQLTLTTSNDVFDTLLLKLIDIFNSDDYSLRIMMTLQIKNMAKILKKTPYQLLSPILPVLLRQLGKNLVERKVGFQNLIELLGYSSKTILDIFQRYIIPYAIIQYKSDVLSEIAKIMCDGDTSLINQMKVNLLKKNSRQIFAVALVKHGLFSLDILETLFLNRAPTFDKGYITAYLPDYKTLAEITKLYKNSVTKDASDSENANMILCSLRFLITNFEKDKRHGSKYKNINNWTDDQEQAFQKKLQDNILGIFQVFSSDIHDVEGRTTYYEKLRVINGISFLIIYAPKKSIISALAQISICLQTGLGLKEVRYEAFRCWHLLVRHLNDEELSTVIDSLIAFILQKWSEFNGKLRNIVYSILDTLIKEKSDLILKLKPYTTLALVGKPELGILARDGQFARMVNKIRSTTDLIPIFANNLKSSNKYVINQNLDDIEVYLRRKQTERSIDFTPKKVGQTSDITLVLGALLDTSHKFRNLDKDLCEKCAKCISMIGVLDVTKHEFKRTTYSENEVYDLNDSVQTIKFLIWVINDILVPAFWQSENPSKQLFVALVIQESLKYCGLSSESWDMNHKELYPNEAKLWEKFNSVSKTTIYPLLSSLYLAQSWKEYVPLKYPSNNFKEGYKIWVKRFTLDLLKTGTTENHPLHVFSSLIREDDGSLSNFLLPYISLDIIIKAEKGTPYADILNGIIIEFDSIFTCNLEGMNNLQVDSLRMCYESIFRVFEYCKKWATEFKQNYSKLHGTFIIKDTKTTNMLLRIDEFLRTTPSDLLAQRSLETDSFERSALYLEQCYRQNPHDKNQNGQLLKNLQITYEEIGDIDSLDGVLRTFATGNLVSKIEELQYSENWKLAQDCFNVLGKFSDDPKTTTRMLKSMYDHQLYSQIISNSSFHSSDGKISLSPDVKEWYSIGLEAANLEGNVQTLKNWVEQIESLRNIDDREVLLQYNIAKALIAISNEDPLRTQKYIHNSFRLIGTNFITSSKETTLLKKQNLLMKLHSLYDLSFLSSAKDKFEYKSNTTILDYRMERIGADFVPNHYILSMRKSFDQLKMNEQADADLGKTFFTLAQLARNNARLDIASESLMHCLERRLPQAELEFAEILWKQGENDRALKIVQEIHEKYQENSSVNARDRAAVLLKFTEWLDLSNNSASEQIIKQYQDIFQIDSKWDKPYYSIGLYYSRLLERKKAEGYITNGRFEYRAISYFLLAFEKNTAKVRENLPKVITFWLDIAAASISEAPGNRKEMLSKATEDICSHVEEALQHCPTYIWYFVLTQLLSRLLHSHQSSAQIIMHILLSLAVEYPSHILWYITALVNSNSSKRVLRGKHILEKYRQHSQNPHDLVSSALDLTKALTRVCLQDVKSITSRSGKSLEKDFKFDMNVAPSAMVVPVRKNLDIISPLESNSMRGYQPFRPVVSIIRFGSSYKVFSSLKKPKQLNIIGSDGNIYGIMCKKEDVRQDNQYMQFATTMDFLLSKDIASRKRSLGINIYSVLSLREDCGILEMVPNVVTLRSILSTKYESLKIKYSLKSLHDRWQHTAVDGKLEFYMEQVDKFPPILYQWFLENFPDPINWFNARNTYARSYAVMAMVGHILGLGDRHCENILLDIQTGKVLHVDFDCLFEKGKRLPVPEIVPFRLTPNLLDALGIIGTEGTFKKSSEVTLALMRKNEVALMNVIETIMYDRNMDHSIQKALKVLRNKIRGIDPQDGLVLSVAGQTETLIQEATSEDNLSKMYIGWLPFW.

Residues 1399–1944 enclose the FAT domain; that stretch reads LLAQRSLETD…LWYITALVNS (546 aa). The 304-residue stretch at 2049-2352 folds into the PI3K/PI4K catalytic domain; sequence FGSSYKVFSS…QTETLIQEAT (304 aa). The interval 2055 to 2061 is G-loop; that stretch reads VFSSLKK. The segment at 2140 to 2368 is binding to the RPA complex; sequence SILSTKYESL…KMYIGWLPFW (229 aa). The segment at 2221–2229 is catalytic loop; the sequence is GLGDRHCEN. The segment at 2241 to 2265 is activation loop; it reads HVDFDCLFEKGKRLPVPEIVPFRLT. The region spanning 2336–2368 is the FATC domain; that stretch reads LVLSVAGQTETLIQEATSEDNLSKMYIGWLPFW.

This sequence belongs to the PI3/PI4-kinase family. ATM subfamily. As to quaternary structure, interacts with LCD1, which is required for localization MEC1 to the RPA complex. Interacts directly with the RPA subunits RFA1 and RFA2.

Its subcellular location is the nucleus. The catalysed reaction is L-seryl-[protein] + ATP = O-phospho-L-seryl-[protein] + ADP + H(+). It catalyses the reaction L-threonyl-[protein] + ATP = O-phospho-L-threonyl-[protein] + ADP + H(+). Serine/threonine protein kinase which activates checkpoint signaling upon genotoxic stresses such as ionizing radiation (IR), ultraviolet light (UV), or DNA replication stalling, thereby acting as a DNA damage sensor. Recognizes the substrate consensus sequence [ST]-Q. Recruited in complex with protein LCD1 by the single-strand-binding protein complex RPA to DNA lesions in order to initiate the DNA repair by homologous recombination, after the MRX-complex and TEL1 are displaced. Phosphorylates LCD1 and RPA2, a subunit of RPA, involved in DNA replication, repair and recombination. Phosphorylates RAD9, CHK1 and RAD53, which leads to the activation of the CHK1 and RAD53 kinases involved in DNA damage repair cascade. Phosphorylates histone H2A to form H2AS128ph (gamma-H2A) at sites of DNA damage, also involved in the regulation of DNA damage response mechanism. Also phosphorylates SLX4 and RTT107 which are proteins involved in genome stability. Required for cell growth and meiotic recombination. The polypeptide is Serine/threonine-protein kinase MEC1 (MEC1) (Saccharomyces cerevisiae (strain ATCC 204508 / S288c) (Baker's yeast)).